The following is a 35-amino-acid chain: 30 kDa neutral phosphatase (35 aa).

A compositionally biased stretch (polar residues) spans 1-28 (KSSAEVQQTQQASIPASQKANLGNQNNI). The tract at residues 1–35 (KSSAEVQQTQQASIPASQKANLGNQNNIMXVAXYQ) is disordered.

Its function is as follows. Highly cationic enzyme that can bind human or rat immunoglobulins as well as serum albumin, and could therefore be involved in post-infectious sequelae. The protein is 30 kDa neutral phosphatase of Staphylococcus aureus.